Here is a 1039-residue protein sequence, read N- to C-terminus: Isoleucine--tRNA ligase (1039 aa).

The 'HIGH' region signature appears at 46–56 (PYCSGAIHLGT). A 'KMSKS' region motif is present at residues 600-604 (KMSKS). Lys603 is a binding site for ATP.

This sequence belongs to the class-I aminoacyl-tRNA synthetase family. IleS type 2 subfamily. In terms of assembly, monomer. It depends on Zn(2+) as a cofactor.

It is found in the cytoplasm. It catalyses the reaction tRNA(Ile) + L-isoleucine + ATP = L-isoleucyl-tRNA(Ile) + AMP + diphosphate. In terms of biological role, catalyzes the attachment of isoleucine to tRNA(Ile). As IleRS can inadvertently accommodate and process structurally similar amino acids such as valine, to avoid such errors it has two additional distinct tRNA(Ile)-dependent editing activities. One activity is designated as 'pretransfer' editing and involves the hydrolysis of activated Val-AMP. The other activity is designated 'posttransfer' editing and involves deacylation of mischarged Val-tRNA(Ile). The protein is Isoleucine--tRNA ligase of Methanocaldococcus jannaschii (strain ATCC 43067 / DSM 2661 / JAL-1 / JCM 10045 / NBRC 100440) (Methanococcus jannaschii).